The sequence spans 537 residues: Putative cysteine ligase BshC (537 aa).

Positions 417–457 (ASEQFLNELDQLEAQQKETYERLAAEVQGNEDNKNLVEKNN) form a coiled coil.

Belongs to the BshC family.

Functionally, involved in bacillithiol (BSH) biosynthesis. May catalyze the last step of the pathway, the addition of cysteine to glucosamine malate (GlcN-Mal) to generate BSH. The sequence is that of Putative cysteine ligase BshC from Staphylococcus carnosus (strain TM300).